Consider the following 313-residue polypeptide: Homoserine O-acetyltransferase (313 aa).

The active-site Acyl-thioester intermediate is the C142. Substrate contacts are provided by K163 and S191. H234 functions as the Proton acceptor in the catalytic mechanism. The active site involves E236. Substrate is bound at residue R248.

It belongs to the MetA family.

It localises to the cytoplasm. It catalyses the reaction L-homoserine + acetyl-CoA = O-acetyl-L-homoserine + CoA. The protein operates within amino-acid biosynthesis; L-methionine biosynthesis via de novo pathway; O-acetyl-L-homoserine from L-homoserine: step 1/1. Its function is as follows. Transfers an acetyl group from acetyl-CoA to L-homoserine, forming acetyl-L-homoserine. The polypeptide is Homoserine O-acetyltransferase (Streptococcus gordonii (strain Challis / ATCC 35105 / BCRC 15272 / CH1 / DL1 / V288)).